A 525-amino-acid polypeptide reads, in one-letter code: GMP synthase [glutamine-hydrolyzing] (525 aa).

Residues 9 to 207 (RILILDFGSQ…VRDICQCEAL (199 aa)) enclose the Glutamine amidotransferase type-1 domain. The active-site Nucleophile is the cysteine 86. Catalysis depends on residues histidine 181 and glutamate 183. One can recognise a GMPS ATP-PPase domain in the interval 208–400 (WTPAKIIDDA…LGLPYDMLYR (193 aa)). An ATP-binding site is contributed by 235-241 (SGGVDSS).

Homodimer.

The enzyme catalyses XMP + L-glutamine + ATP + H2O = GMP + L-glutamate + AMP + diphosphate + 2 H(+). Its pathway is purine metabolism; GMP biosynthesis; GMP from XMP (L-Gln route): step 1/1. Its function is as follows. Catalyzes the synthesis of GMP from XMP. The protein is GMP synthase [glutamine-hydrolyzing] of Escherichia coli (strain K12 / MC4100 / BW2952).